The primary structure comprises 474 residues: ATP synthase subunit beta (474 aa).

ATP is bound at residue 151–158 (GGAGVGKT).

The protein belongs to the ATPase alpha/beta chains family. F-type ATPases have 2 components, CF(1) - the catalytic core - and CF(0) - the membrane proton channel. CF(1) has five subunits: alpha(3), beta(3), gamma(1), delta(1), epsilon(1). CF(0) has four main subunits: a(1), b(1), b'(1) and c(9-12).

The protein resides in the cell inner membrane. The enzyme catalyses ATP + H2O + 4 H(+)(in) = ADP + phosphate + 5 H(+)(out). Functionally, produces ATP from ADP in the presence of a proton gradient across the membrane. The catalytic sites are hosted primarily by the beta subunits. In Roseobacter denitrificans (strain ATCC 33942 / OCh 114) (Erythrobacter sp. (strain OCh 114)), this protein is ATP synthase subunit beta.